The following is a 518-amino-acid chain: MDRAPQRQHQASRELLAAKKTHTSQIEVIPCKICGDKSSGIHYGVITCEGCKGFFRRSQRCNAAYSCTRQQNCPIDRTSRNRCQHCRLQKCLALGMSRDAVKFGRMSKKQRDSLHAEVQKQLQQRQQQQQEPVVKTPPAGAQGADTLTYTLGLPDGQLPLGSSPDLPEASACPPGLLKASGSGPSYSNNLAKAGLNGASCHLEYSPERGKAEGRESFYSTGSQLTPDRCGLRFEEHRHPGLGELGQGPDSYGSPSFRSTPEAPYASLTEIEHLVQSVCKSYRETCQLRLEDLLRQRSNIFSREEVTGYQRKSMWEMWERCAHHLTEAIQYVVEFAKRLSGFMELCQNDQIVLLKAGAVEVVLVRMCRAYNADNRTVFFEGKYGGMELFRALGCSELISSIFDFSHSLSALHFSEDEIALYTALVLINAYRPGLQEKRKVEQLQYNLELAFHHHLCKTHRQSILAKLPPKGKLRSLCSQHVERLQIFQHLHPIVVQATFPPLYKELFSTETESPVGLSK.

Residues 1-30 are modulating; sequence MDRAPQRQHQASRELLAAKKTHTSQIEVIP. 2 NR C4-type zinc fingers span residues 31–51 and 67–91; these read CKICGDKSSGIHYGVITCEGC and CTRQQNCPIDRTSRNRCQHCRLQKC. The segment at residues 31–96 is a DNA-binding region (nuclear receptor); it reads CKICGDKSSG…RLQKCLALGM (66 aa). Disordered stretches follow at residues 105–183 and 238–258; these read RMSK…SGSG and HPGLGELGQGPDSYGSPSFRS. Positions 109 to 118 are enriched in basic and acidic residues; that stretch reads KQRDSLHAEV. Low complexity predominate over residues 119 to 130; that stretch reads QKQLQQRQQQQQ. Residues 269-508 enclose the NR LBD domain; it reads EIEHLVQSVC…PPLYKELFST (240 aa). The AF-2 signature appears at 501–506; it reads LYKELF.

The protein belongs to the nuclear hormone receptor family. NR1 subfamily. Interacts (via AF-2 motif) with the coactivators NCOA1, NCOA2 and PPARGC1A (via LXXLL motif). Interacts with the corepressor NCOR1. Interacts with CRY1. Interacts (via AF-2 motif) with PROX1. Interacts with FOXP3. Interacts with NR0B2.

The protein localises to the nucleus. Nuclear receptor that binds DNA as a monomer to ROR response elements (RORE) containing a single core motif half-site 5'-AGGTCA-3' preceded by a short A-T-rich sequence. Key regulator of cellular differentiation, immunity, peripheral circadian rhythm as well as lipid, steroid, xenobiotics and glucose metabolism. Considered to have intrinsic transcriptional activity, have some natural ligands like oxysterols that act as agonists (25-hydroxycholesterol) or inverse agonists (7-oxygenated sterols), enhancing or repressing the transcriptional activity, respectively. Recruits distinct combinations of cofactors to target gene regulatory regions to modulate their transcriptional expression, depending on the tissue, time and promoter contexts. Regulates the circadian expression of clock genes such as CRY1, BMAL1 and NR1D1 in peripheral tissues and in a tissue-selective manner. Competes with NR1D1 for binding to their shared DNA response element on some clock genes such as BMAL1, CRY1 and NR1D1 itself, resulting in NR1D1-mediated repression or RORC-mediated activation of the expression, leading to the circadian pattern of clock genes expression. Therefore influences the period length and stability of the clock. Involved in the regulation of the rhythmic expression of genes involved in glucose and lipid metabolism, including PLIN2 and AVPR1A. Negative regulator of adipocyte differentiation through the regulation of early phase genes expression, such as MMP3. Controls adipogenesis as well as adipocyte size and modulates insulin sensitivity in obesity. In liver, has specific and redundant functions with RORA as positive or negative modulator of expression of genes encoding phase I and Phase II proteins involved in the metabolism of lipids, steroids and xenobiotics, such as SULT1E1. Also plays a role in the regulation of hepatocyte glucose metabolism through the regulation of G6PC1 and PCK1. Essential for thymopoiesis and the development of several secondary lymphoid tissues, including lymph nodes and Peyer's patches. Required for the generation of LTi (lymphoid tissue inducer) cells. Regulates thymocyte survival through DNA-binding on ROREs of target gene promoter regions and recruitment of coactivaros via the AF-2. Also plays a key role, downstream of IL6 and TGFB and synergistically with RORA, for lineage specification of uncommitted CD4(+) T-helper (T(H)) cells into T(H)17 cells, antagonizing the T(H)1 program. Probably regulates IL17 and IL17F expression on T(H) by binding to the essential enhancer conserved non-coding sequence 2 (CNS2) in the IL17-IL17F locus. May also play a role in the pre-TCR activation cascade leading to the maturation of alpha/beta T-cells and may participate in the regulation of DNA accessibility in the TCR-J(alpha) locus. Regulates the rhythmic expression of PROX1 and promotes its nuclear localization. Plays an indispensable role in the induction of IFN-gamma dependent anti-mycobacterial systemic immunity. This Pongo abelii (Sumatran orangutan) protein is Nuclear receptor ROR-gamma (RORC).